The following is a 141-amino-acid chain: MEQTLSIIKPDSVGKAHIGEIIAIFEKSGLRIAAMKMVHLSVKEAEGFYVVHKERPFFQELVDFMISGPVVVMVLQGENAVARNRELMGATNPKEAAEGSIRALFGESIGVNAVHGSDSLENAAIEVSYFFAKTEVVNSVA.

Residues K9, F57, R85, T91, R102, and N112 each coordinate ATP. Residue H115 is the Pros-phosphohistidine intermediate of the active site.

It belongs to the NDK family. As to quaternary structure, homotetramer. Requires Mg(2+) as cofactor.

The protein localises to the cytoplasm. It catalyses the reaction a 2'-deoxyribonucleoside 5'-diphosphate + ATP = a 2'-deoxyribonucleoside 5'-triphosphate + ADP. The catalysed reaction is a ribonucleoside 5'-diphosphate + ATP = a ribonucleoside 5'-triphosphate + ADP. In terms of biological role, major role in the synthesis of nucleoside triphosphates other than ATP. The ATP gamma phosphate is transferred to the NDP beta phosphate via a ping-pong mechanism, using a phosphorylated active-site intermediate. The sequence is that of Nucleoside diphosphate kinase from Chlamydia trachomatis serovar L2 (strain ATCC VR-902B / DSM 19102 / 434/Bu).